A 75-amino-acid chain; its full sequence is uncharacterized protein (75 aa).

This is an uncharacterized protein from Escherichia coli O6:H1 (strain CFT073 / ATCC 700928 / UPEC).